A 565-amino-acid polypeptide reads, in one-letter code: Proline--tRNA ligase (565 aa).

This sequence belongs to the class-II aminoacyl-tRNA synthetase family. ProS type 1 subfamily. As to quaternary structure, homodimer.

Its subcellular location is the cytoplasm. The catalysed reaction is tRNA(Pro) + L-proline + ATP = L-prolyl-tRNA(Pro) + AMP + diphosphate. Its function is as follows. Catalyzes the attachment of proline to tRNA(Pro) in a two-step reaction: proline is first activated by ATP to form Pro-AMP and then transferred to the acceptor end of tRNA(Pro). As ProRS can inadvertently accommodate and process non-cognate amino acids such as alanine and cysteine, to avoid such errors it has two additional distinct editing activities against alanine. One activity is designated as 'pretransfer' editing and involves the tRNA(Pro)-independent hydrolysis of activated Ala-AMP. The other activity is designated 'posttransfer' editing and involves deacylation of mischarged Ala-tRNA(Pro). The misacylated Cys-tRNA(Pro) is not edited by ProRS. The sequence is that of Proline--tRNA ligase from Francisella tularensis subsp. mediasiatica (strain FSC147).